The sequence spans 1954 residues: Integrin beta-like protein C (1954 aa).

A signal peptide spans 1 to 20 (MNKLFYLFILIASLFILTDA). Residues 21–1883 (SHFRFGTISW…TTTQTNDNKT (1863 aa)) lie on the Extracellular side of the membrane. N-linked (GlcNAc...) asparagine glycosylation is found at N138 and N354. Residues 428–465 (YGENCVAVPPCVNGVPNSGINGDGKCLCSNGWTGADCS) enclose the EGF-like domain. Intrachain disulfides connect C438-C453 and C455-C464. N-linked (GlcNAc...) asparagine glycosylation occurs at N479. Residues 521 to 706 (DVYVLVDANL…TGVKNVLSKI (186 aa)) form the VWFA domain. Residues N1348, N1382, N1628, N1678, N1742, N1770, N1820, N1860, and N1881 are each glycosylated (N-linked (GlcNAc...) asparagine). The chain crosses the membrane as a helical span at residues 1884-1904 (VLTGAIAGAAAGTALIAAAAW). Residues 1905–1954 (RLLRKAAPPTDTFFSEAAFLGDGVSSNPLYEQSASAAENPLYQSASDTTD) are Cytoplasmic-facing.

It belongs to the SIB family. In terms of assembly, interacts with talA/talin.

The protein localises to the membrane. Functionally, implicated in cellular adhesion. This is Integrin beta-like protein C (sibC) from Dictyostelium discoideum (Social amoeba).